The sequence spans 334 residues: Glyceraldehyde-3-phosphate dehydrogenase (334 aa).

Residues 12–13 (TI) and glycine 111 each bind NAD(+). 140–142 (SCN) serves as a coordination point for D-glyceraldehyde 3-phosphate. The active-site Nucleophile is the cysteine 141. Arginine 167 lines the NAD(+) pocket. Residue 192 to 193 (HG) participates in D-glyceraldehyde 3-phosphate binding. Glutamine 298 contacts NAD(+).

This sequence belongs to the glyceraldehyde-3-phosphate dehydrogenase family. As to quaternary structure, homotetramer.

The protein localises to the cytoplasm. It carries out the reaction D-glyceraldehyde 3-phosphate + phosphate + NADP(+) = (2R)-3-phospho-glyceroyl phosphate + NADPH + H(+). The enzyme catalyses D-glyceraldehyde 3-phosphate + phosphate + NAD(+) = (2R)-3-phospho-glyceroyl phosphate + NADH + H(+). The protein operates within carbohydrate degradation; glycolysis; pyruvate from D-glyceraldehyde 3-phosphate: step 1/5. This chain is Glyceraldehyde-3-phosphate dehydrogenase, found in Thermococcus kodakarensis (strain ATCC BAA-918 / JCM 12380 / KOD1) (Pyrococcus kodakaraensis (strain KOD1)).